Reading from the N-terminus, the 288-residue chain is 3'-5' exonuclease (288 aa).

A disordered region spans residues 30–67 (RSSSSSSSAAPTVQATTSVHGHEEDPNQIPNNIRRQLP). 2 stretches are compositionally biased toward polar residues: residues 38–48 (AAPTVQATTSV) and 57–67 (QIPNNIRRQLP). Residues 129 to 279 (FVGLDIEWRP…ASWHLYKVLK (151 aa)) enclose the 3'-5' exonuclease domain.

In terms of assembly, interacts with KU70 and KU80. Interacts with RECQL2. The cofactor is Mg(2+). Mn(2+) is required as a cofactor. As to expression, expressed ubiquitously.

Its subcellular location is the nucleus. With respect to regulation, activated upon interaction with the KU heterodimer. Not stimulated by ATP. Exonuclease that digests recessed strands of DNA duplexes in the 3' to 5' direction but hardly single-stranded DNA or blunt-ended duplexes. Also able to digest 3'-protruding strands and 3'-recessed strand termini of duplexes containing mismatched bases. The protein is 3'-5' exonuclease (WEX) of Arabidopsis thaliana (Mouse-ear cress).